The chain runs to 314 residues: Acetyl-coenzyme A carboxylase carboxyl transferase subunit alpha (314 aa).

One can recognise a CoA carboxyltransferase C-terminal domain in the interval 32 to 289; the sequence is EIDMLEASLA…KRTFESHLSE (258 aa).

Belongs to the AccA family. In terms of assembly, acetyl-CoA carboxylase is a heterohexamer composed of biotin carboxyl carrier protein (AccB), biotin carboxylase (AccC) and two subunits each of ACCase subunit alpha (AccA) and ACCase subunit beta (AccD).

It is found in the cytoplasm. It carries out the reaction N(6)-carboxybiotinyl-L-lysyl-[protein] + acetyl-CoA = N(6)-biotinyl-L-lysyl-[protein] + malonyl-CoA. It functions in the pathway lipid metabolism; malonyl-CoA biosynthesis; malonyl-CoA from acetyl-CoA: step 1/1. Functionally, component of the acetyl coenzyme A carboxylase (ACC) complex. First, biotin carboxylase catalyzes the carboxylation of biotin on its carrier protein (BCCP) and then the CO(2) group is transferred by the carboxyltransferase to acetyl-CoA to form malonyl-CoA. The chain is Acetyl-coenzyme A carboxylase carboxyl transferase subunit alpha from Staphylococcus saprophyticus subsp. saprophyticus (strain ATCC 15305 / DSM 20229 / NCIMB 8711 / NCTC 7292 / S-41).